A 717-amino-acid chain; its full sequence is Photosystem I P700 chlorophyll a apoprotein A1 (717 aa).

8 helical membrane passes run 59 to 82 (VFRAHFGQLAIILIWLSGMYFHGA), 145 to 168 (LYCTAIGALIFAALMLFAGWFHYH), 184 to 208 (LNHHLAGLLGLGSLSWAGHQVHVSL), 280 to 298 (TAHHHLAIAILFLIAGHMY), 335 to 358 (WHAQLALNLAMLGSLTIVVAHHMY), 374 to 400 (LSLFTHHMWIGGFLIVGAAAHAAIFMV), 422 to 444 (AIVSHLNWACIFLGFHSFGLYIH), and 520 to 538 (FLVHHIHAFTIHVTVLILL). [4Fe-4S] cluster contacts are provided by C562 and C571. The next 2 membrane-spanning stretches (helical) occupy residues 578–599 (HVFLGLFWMYNAISVVIFHFSW) and 653–675 (LSAYGLLFLGAHXVWAFSLMFLF). H664 is a chlorophyll a' binding site. The chlorophyll a site is built by M672 and Y680. W681 contacts phylloquinone. The chain crosses the membrane as a helical span at residues 713 to 717 (AVGVA).

Belongs to the PsaA/PsaB family. In terms of assembly, the PsaA/B heterodimer binds the P700 chlorophyll special pair and subsequent electron acceptors. PSI consists of a core antenna complex that captures photons, and an electron transfer chain that converts photonic excitation into a charge separation. The eukaryotic PSI reaction center is composed of at least 11 subunits. Requires P700 is a chlorophyll a/chlorophyll a' dimer, A0 is one or more chlorophyll a, A1 is one or both phylloquinones and FX is a shared 4Fe-4S iron-sulfur center. as cofactor.

The protein localises to the plastid. The protein resides in the chloroplast thylakoid membrane. The catalysed reaction is reduced [plastocyanin] + hnu + oxidized [2Fe-2S]-[ferredoxin] = oxidized [plastocyanin] + reduced [2Fe-2S]-[ferredoxin]. Functionally, psaA and PsaB bind P700, the primary electron donor of photosystem I (PSI), as well as the electron acceptors A0, A1 and FX. PSI is a plastocyanin-ferredoxin oxidoreductase, converting photonic excitation into a charge separation, which transfers an electron from the donor P700 chlorophyll pair to the spectroscopically characterized acceptors A0, A1, FX, FA and FB in turn. Oxidized P700 is reduced on the lumenal side of the thylakoid membrane by plastocyanin. The polypeptide is Photosystem I P700 chlorophyll a apoprotein A1 (Cycas revoluta (Sago palm)).